The sequence spans 80 residues: UPF0270 protein VFMJ11_0205 (80 aa).

This sequence belongs to the UPF0270 family.

The polypeptide is UPF0270 protein VFMJ11_0205 (Aliivibrio fischeri (strain MJ11) (Vibrio fischeri)).